Reading from the N-terminus, the 160-residue chain is E3 ubiquitin ligase complex SCF subunit sconC (160 aa).

The tract at residues 101–160 is interaction with the F-box domain of F-box proteins; that stretch reads ILAANYLDIKALLDVGCKTVANMIKGKSPEEIRKTFNIQNDFTPEEEDQIRRENEWAEDR.

It belongs to the SKP1 family. As to quaternary structure, component of the SCF (SKP1-CUL1-F-box protein) E3 ubiquitin ligase complexes.

It functions in the pathway protein modification; protein ubiquitination. Its function is as follows. Essential component of the SCF (SKP1-CUL1-F-box protein) E3 ubiquitin ligase complexes, which mediate the ubiquitination and subsequent proteasomal degradation of target proteins. Controls sulfur metabolite repression, probably by mediating the inactivation or degradation of the metR transcription factor. The polypeptide is E3 ubiquitin ligase complex SCF subunit sconC (sconC) (Talaromyces marneffei (strain ATCC 18224 / CBS 334.59 / QM 7333) (Penicillium marneffei)).